A 588-amino-acid polypeptide reads, in one-letter code: L-fucose isomerase (588 aa).

Active-site proton acceptor residues include Glu-335 and Asp-359. 3 residues coordinate Mn(2+): Glu-335, Asp-359, and His-525.

This sequence belongs to the L-fucose isomerase family. Requires Mn(2+) as cofactor.

It is found in the cytoplasm. The enzyme catalyses L-fucose = L-fuculose. The protein operates within carbohydrate degradation; L-fucose degradation; L-lactaldehyde and glycerone phosphate from L-fucose: step 1/3. Converts the aldose L-fucose into the corresponding ketose L-fuculose. The sequence is that of L-fucose isomerase from Streptococcus pneumoniae (strain 70585).